The chain runs to 78 residues: Acyl carrier protein (78 aa).

The Carrier domain maps to 2–77; sequence STIEERVKKI…AAIDFINANQ (76 aa). Ser-37 carries the O-(pantetheine 4'-phosphoryl)serine modification.

This sequence belongs to the acyl carrier protein (ACP) family. In terms of processing, 4'-phosphopantetheine is transferred from CoA to a specific serine of apo-ACP by AcpS. This modification is essential for activity because fatty acids are bound in thioester linkage to the sulfhydryl of the prosthetic group.

The protein localises to the cytoplasm. The protein operates within lipid metabolism; fatty acid biosynthesis. Carrier of the growing fatty acid chain in fatty acid biosynthesis. In Yersinia pseudotuberculosis serotype O:1b (strain IP 31758), this protein is Acyl carrier protein.